The primary structure comprises 247 residues: Probable phosphatase swp_1620 (247 aa).

9 residues coordinate Zn(2+): His8, His10, His16, His41, Glu74, His102, His132, Asp193, and His195.

The protein belongs to the PHP family. It depends on Zn(2+) as a cofactor.

The chain is Probable phosphatase swp_1620 from Shewanella piezotolerans (strain WP3 / JCM 13877).